A 360-amino-acid polypeptide reads, in one-letter code: Protein Wnt-2 (360 aa).

The first 26 residues, 1–26 (MNAPLGGIWLWLPLLLTWLTPEVSSS), serve as a signal peptide directing secretion. Intrachain disulfides connect C76–C87, C127–C135, C137–C157, C206–C220, C208–C215, C278–C309, C294–C304, C308–C348, C324–C339, C326–C336, and C331–C332. The O-palmitoleoyl serine; by PORCN moiety is linked to residue S212. N-linked (GlcNAc...) asparagine glycosylation occurs at N295.

It belongs to the Wnt family. Post-translationally, palmitoleoylation is required for efficient binding to frizzled receptors. Depalmitoleoylation leads to Wnt signaling pathway inhibition.

The protein resides in the secreted. Its subcellular location is the extracellular space. The protein localises to the extracellular matrix. Its function is as follows. Ligand for members of the frizzled family of seven transmembrane receptors. Probable developmental protein. May be a signaling molecule which affects the development of discrete regions of tissues. Is likely to signal over only few cell diameters. The polypeptide is Protein Wnt-2 (WNT2) (Eulemur macaco macaco (Black lemur)).